The sequence spans 420 residues: Gamma-glutamyl phosphate reductase (420 aa).

Belongs to the gamma-glutamyl phosphate reductase family.

Its subcellular location is the cytoplasm. It carries out the reaction L-glutamate 5-semialdehyde + phosphate + NADP(+) = L-glutamyl 5-phosphate + NADPH + H(+). The protein operates within amino-acid biosynthesis; L-proline biosynthesis; L-glutamate 5-semialdehyde from L-glutamate: step 2/2. Catalyzes the NADPH-dependent reduction of L-glutamate 5-phosphate into L-glutamate 5-semialdehyde and phosphate. The product spontaneously undergoes cyclization to form 1-pyrroline-5-carboxylate. The sequence is that of Gamma-glutamyl phosphate reductase from Laribacter hongkongensis (strain HLHK9).